The sequence spans 251 residues: Myozenin-3 (251 aa).

At Ser31 the chain carries Phosphoserine. Residues 50–67 (LLFQKRQRRVQKFTFELA) are binding to ACTN2, PPP3CA and TCAP. The binding to FLNC stretch occupies residues 67-110 (AASQRAMLAGSARRKVTGTAESGTVANANGPEGPNYRSELHIFP). The tract at residues 79 to 102 (RRKVTGTAESGTVANANGPEGPNY) is disordered. Positions 186-207 (PSPNDYRNFNKTPVPFGGPLVG) are binding to ACTN2.

Belongs to the myozenin family. As to quaternary structure, interacts with ACTN2, LDB3, FLNC, PPP3CA and TCAP. As to expression, expressed specifically in skeletal muscle. Not detected in heart.

It is found in the cytoplasm. Its subcellular location is the myofibril. The protein resides in the sarcomere. The protein localises to the z line. Myozenins may serve as intracellular binding proteins involved in linking Z line proteins such as alpha-actinin, gamma-filamin, TCAP/telethonin, LDB3/ZASP and localizing calcineurin signaling to the sarcomere. Plays an important role in the modulation of calcineurin signaling. May play a role in myofibrillogenesis. This is Myozenin-3 from Homo sapiens (Human).